A 642-amino-acid chain; its full sequence is MEPYAILYVTQEIEYLLKDSFLPKWELDGIKDLNTLWLERGRMACDTYAIGKIEQWSVRQLRAHRFLFISTKRKIRLKDCTISPDIFILKKELKEYDMKRFETLIGRRRVTLRKSFGNMLRAYAFQHVTVLHGSEAETLSYADPKRHVVKGQPKAAPMYDHPDRWWRDVDDGPTDKKLVSMLDYIIYSADEVYYVGCGDLKTLEQFASRDRKRFDRIKWICIDPIAPETSYANVKVVREKVVSARDLKHYLMRDEVERLLIWDVSADGLKGTIEWEKQRFKEDRNGENIAEALCADFALALIKHRIPEESDEYICRSSWLIPQPGAPITMYELRNLMRLDGYSHVERKHIPRAYARKIDAEVARRLVEEYHGEDVGRLLKRSLYEDIHIERADGLTDGDERTRADLFYLTNMRNVAFMHDVYRVVEKSFISTLWVSNRQNFTYDDVPVNRNFITLRFSKKNRRVLDGNGAILFLMWQHPKDFPKTMNYDPSWAENYAVIFYHALTSPVPDLSLCRFIGLRLMSSTLRINSDRAHQVTDILKKLGLDVSGHLFICLMSNSYVADLDWWFRMILEWSVKDREGKLAALSEAKAELIEWRDEKADEPWHIKNDLLAALFEFIYFAKHFDINERYVESWIQYLRNA.

The protein belongs to the orbivirus VP4 family.

The protein resides in the virion. The VP4 protein is one of the five proteins (with VP1, VP3, VP6 and VP7) which form the inner capsid of the virus. This is Core protein VP4 (Segment-4) from African horse sickness virus (AHSV).